Consider the following 338-residue polypeptide: Ribosomal RNA small subunit methyltransferase C (338 aa).

It belongs to the methyltransferase superfamily. RsmC family. Monomer.

It localises to the cytoplasm. The catalysed reaction is guanosine(1207) in 16S rRNA + S-adenosyl-L-methionine = N(2)-methylguanosine(1207) in 16S rRNA + S-adenosyl-L-homocysteine + H(+). Functionally, specifically methylates the guanine in position 1207 of 16S rRNA in the 30S particle. The polypeptide is Ribosomal RNA small subunit methyltransferase C (Acinetobacter baylyi (strain ATCC 33305 / BD413 / ADP1)).